Here is a 188-residue protein sequence, read N- to C-terminus: Sulfopyruvate decarboxylase subunit beta (188 aa).

It belongs to the TPP enzyme family. In terms of assembly, heterododecamer composed of 6 subunits alpha and 6 subunits beta. It depends on thiamine diphosphate as a cofactor.

It catalyses the reaction 3-sulfopyruvate + H(+) = sulfoacetaldehyde + CO2. It participates in cofactor biosynthesis; coenzyme M biosynthesis; sulfoacetaldehyde from phosphoenolpyruvate and sulfite: step 4/4. Inhibited by oxygen when heated in air at 80 degrees Celsius. The enzyme is reactivated by addition of dithionite. Involved in the biosynthesis of the coenzyme M (2-mercaptoethanesulfonic acid). Catalyzes the decarboxylation of sulfopyruvate to sulfoacetaldehyde. The polypeptide is Sulfopyruvate decarboxylase subunit beta (Methanocaldococcus jannaschii (strain ATCC 43067 / DSM 2661 / JAL-1 / JCM 10045 / NBRC 100440) (Methanococcus jannaschii)).